The following is a 154-amino-acid chain: Ribosome maturation factor RimP (154 aa).

The protein belongs to the RimP family.

The protein resides in the cytoplasm. In terms of biological role, required for maturation of 30S ribosomal subunits. In Acetivibrio thermocellus (strain ATCC 27405 / DSM 1237 / JCM 9322 / NBRC 103400 / NCIMB 10682 / NRRL B-4536 / VPI 7372) (Clostridium thermocellum), this protein is Ribosome maturation factor RimP.